Reading from the N-terminus, the 21-residue chain is Peptide PGLa-R2 (21 aa).

Position 21 is a leucine amide (L21).

Expressed by the skin glands.

Its subcellular location is the secreted. Its function is as follows. Antimicrobial peptide. The polypeptide is Peptide PGLa-R2 (Xenopus ruwenzoriensis (Uganda clawed frog)).